Consider the following 459-residue polypeptide: Anthocyanidin 3-O-glucoside 2''-O-glucosyltransferase (459 aa).

The active-site Proton acceptor is the H20. H20 serves as a coordination point for an anthocyanidin. Residue D117 is the Charge relay of the active site. UDP-alpha-D-glucose contacts are provided by T138, V335, Q337, H352, W355, S357, and E360. An an anthocyanidin-binding site is contributed by G375. UDP-alpha-D-glucose contacts are provided by D376 and Q377.

This sequence belongs to the UDP-glycosyltransferase family. As to expression, mainly expressed in the petals and tubes of flower buds at around 24 hours before flower opening.

It carries out the reaction an anthocyanidin 3-O-beta-D-glucoside + UDP-alpha-D-glucose = an anthocyanidin 3-O-sophoroside + UDP + 2 H(+). Its pathway is pigment biosynthesis; anthocyanin biosynthesis. Its function is as follows. Glycosyltransferase that mediates the glucosylation of anthocyanidin 3-O-glucosides to yield anthocyanidin 3-O-sophorosides. 3-O-sophoroside derivatives are required for the bright blue or red color of flowers. This Ipomoea nil (Japanese morning glory) protein is Anthocyanidin 3-O-glucoside 2''-O-glucosyltransferase (3GGT).